The primary structure comprises 439 residues: Microfibrillar-associated protein 1 (439 aa).

Disordered regions lie at residues 1–27 and 39–200; these read MSVPSALMKQPPIQSTAGAVPVRNEKG and YVSG…PRLK. Serine 2 carries the post-translational modification N-acetylserine. Phosphoserine occurs at positions 52 and 53. The span at 61-70 shows a compositional bias: basic and acidic residues; sequence QFIKKAKEQE. Lysine 67 is covalently cross-linked (Glycyl lysine isopeptide (Lys-Gly) (interchain with G-Cter in SUMO2)). Acidic residues predominate over residues 71–81; that stretch reads AEPEEQEEDSS. Serine 94, serine 116, serine 118, serine 132, and serine 133 each carry phosphoserine. 2 stretches are compositionally biased toward acidic residues: residues 112 to 122 and 131 to 144; these read VVGESDSEVEG and DSSEEEEEEIDDEE. The segment covering 145-163 has biased composition (basic and acidic residues); that stretch reads IERRRGMMRQRAQERKNEE. The span at 178-195 shows a compositional bias: acidic residues; that stretch reads ESESESEYEEYTDSEDEM. A Glycyl lysine isopeptide (Lys-Gly) (interchain with G-Cter in SUMO2) cross-link involves residue lysine 249. Threonine 267 carries the post-translational modification Phosphothreonine. Lysine 357 is covalently cross-linked (Glycyl lysine isopeptide (Lys-Gly) (interchain with G-Cter in SUMO2)). At serine 361 the chain carries Phosphoserine. Residues lysine 371, lysine 381, lysine 415, and lysine 418 each participate in a glycyl lysine isopeptide (Lys-Gly) (interchain with G-Cter in SUMO2) cross-link. Serine 432 carries the phosphoserine modification.

It belongs to the MFAP1 family. In terms of assembly, component of the spliceosome B complex. Interacts with PRPF38A (via N-terminal interaction domain).

It localises to the nucleus. In terms of biological role, involved in pre-mRNA splicing as a component of the spliceosome. This is Microfibrillar-associated protein 1 from Homo sapiens (Human).